Consider the following 250-residue polypeptide: Glutathione transferase omega-1 (250 aa).

In terms of domain architecture, GST N-terminal spans 21 to 101; it reads SKGSFRVYNM…YLDDAFPETR (81 aa). Residue cysteine 33 is the Nucleophile of the active site. Glutathione contacts are provided by residues lysine 60 and 85–86; that span reads ES. The GST C-terminal domain occupies 106-234; the sequence is DPYEKVQQKL…TQSLEHGAAF (129 aa).

Belongs to the GST superfamily. Omega family. As to quaternary structure, homodimer. Expressed in the intestinal cells.

It localises to the cytoplasm. The catalysed reaction is RX + glutathione = an S-substituted glutathione + a halide anion + H(+). It catalyses the reaction L-dehydroascorbate + 2 glutathione = glutathione disulfide + L-ascorbate. It carries out the reaction methylarsonate + 2 glutathione + H(+) = methylarsonous acid + glutathione disulfide + H2O. Functionally, exhibits glutathione-dependent thiol transferase activity. Has dehydroascorbate reductase activity and may contribute to the recycling of ascorbic acid. Participates in the biotransformation of inorganic arsenic and reduces monomethylarsonic acid (MMA). Protects against environmental stress and oxidative stress. The polypeptide is Glutathione transferase omega-1 (gsto-1) (Caenorhabditis elegans).